Consider the following 277-residue polypeptide: 3-methyl-2-oxobutanoate hydroxymethyltransferase (277 aa).

The Mg(2+) site is built by Asp53 and Asp96. 3-methyl-2-oxobutanoate-binding positions include 53 to 54 (DS), Asp96, and Lys126. Glu128 lines the Mg(2+) pocket. The active-site Proton acceptor is Glu195.

The protein belongs to the PanB family. Homodecamer; pentamer of dimers. The cofactor is Mg(2+).

The protein localises to the cytoplasm. It carries out the reaction 3-methyl-2-oxobutanoate + (6R)-5,10-methylene-5,6,7,8-tetrahydrofolate + H2O = 2-dehydropantoate + (6S)-5,6,7,8-tetrahydrofolate. It functions in the pathway cofactor biosynthesis; (R)-pantothenate biosynthesis; (R)-pantoate from 3-methyl-2-oxobutanoate: step 1/2. Its function is as follows. Catalyzes the reversible reaction in which hydroxymethyl group from 5,10-methylenetetrahydrofolate is transferred onto alpha-ketoisovalerate to form ketopantoate. This is 3-methyl-2-oxobutanoate hydroxymethyltransferase from Chlorobaculum tepidum (strain ATCC 49652 / DSM 12025 / NBRC 103806 / TLS) (Chlorobium tepidum).